The following is a 203-amino-acid chain: Small ribosomal subunit protein uS4 (203 aa).

The region spanning 93–155 (RRLDSIVYRL…SKNLQQIRDA (63 aa)) is the S4 RNA-binding domain.

The protein belongs to the universal ribosomal protein uS4 family. As to quaternary structure, part of the 30S ribosomal subunit. Contacts protein S5. The interaction surface between S4 and S5 is involved in control of translational fidelity.

Its function is as follows. One of the primary rRNA binding proteins, it binds directly to 16S rRNA where it nucleates assembly of the body of the 30S subunit. With S5 and S12 plays an important role in translational accuracy. The protein is Small ribosomal subunit protein uS4 of Lactobacillus acidophilus (strain ATCC 700396 / NCK56 / N2 / NCFM).